The following is a 76-amino-acid chain: uncharacterized protein (76 aa).

This sequence to M.jannaschii MJ0857 N-terminal region.

This is an uncharacterized protein from Methanocaldococcus jannaschii (strain ATCC 43067 / DSM 2661 / JAL-1 / JCM 10045 / NBRC 100440) (Methanococcus jannaschii).